A 101-amino-acid chain; its full sequence is Acylphosphatase (101 aa).

In terms of domain architecture, Acylphosphatase-like spans 12 to 98 (RAHVFVTGRV…EGLRGFEVKR (87 aa)). Catalysis depends on residues Arg-27 and Asn-45.

It belongs to the acylphosphatase family.

The enzyme catalyses an acyl phosphate + H2O = a carboxylate + phosphate + H(+). In Nostoc sp. (strain PCC 7120 / SAG 25.82 / UTEX 2576), this protein is Acylphosphatase (acyP).